We begin with the raw amino-acid sequence, 389 residues long: Trans-2-enoyl-CoA reductase [NADH] (389 aa).

Residues 47-52 (GASTGY), 73-74 (FE), 110-111 (DA), and 138-139 (LA) each bind NAD(+). Residue tyrosine 224 coordinates substrate. Residue tyrosine 234 is the Proton donor of the active site. NAD(+)-binding positions include lysine 243 and 272–274 (LVT).

Belongs to the TER reductase family. As to quaternary structure, monomer.

The catalysed reaction is a 2,3-saturated acyl-CoA + NAD(+) = a (2E)-enoyl-CoA + NADH + H(+). The protein operates within lipid metabolism; fatty acid biosynthesis. Functionally, involved in the fatty acid synthesis (FAS II). Catalyzes the reduction of a carbon-carbon double bond in an enoyl moiety that is covalently linked to a coenzyme A (CoA). The chain is Trans-2-enoyl-CoA reductase [NADH] from Clostridium perfringens (strain ATCC 13124 / DSM 756 / JCM 1290 / NCIMB 6125 / NCTC 8237 / Type A).